Consider the following 271-residue polypeptide: Bis(5'-nucleosyl)-tetraphosphatase, symmetrical (271 aa).

It belongs to the Ap4A hydrolase family.

It catalyses the reaction P(1),P(4)-bis(5'-adenosyl) tetraphosphate + H2O = 2 ADP + 2 H(+). Functionally, hydrolyzes diadenosine 5',5'''-P1,P4-tetraphosphate to yield ADP. In Aliivibrio fischeri (strain ATCC 700601 / ES114) (Vibrio fischeri), this protein is Bis(5'-nucleosyl)-tetraphosphatase, symmetrical.